Here is a 255-residue protein sequence, read N- to C-terminus: UPF0246 protein DP0358 (255 aa).

This sequence belongs to the UPF0246 family.

In Desulfotalea psychrophila (strain LSv54 / DSM 12343), this protein is UPF0246 protein DP0358.